Reading from the N-terminus, the 141-residue chain is Decarboxylase CPUR_05434 (141 aa).

An EthD domain is found at 26–121; the sequence is EGMSEEAYRN…MHDHEMFADT (96 aa).

This sequence belongs to the tpcK family.

The enzyme catalyses atrochrysone carboxylate + H(+) = atrochrysone + CO2. Decarboxylase; part of the ergochrome gene cluster responsible for the typical purple-black color of the ergot sclerotia. The ergochrome gene cluster produces several ergot pigments including the yellow ergochrome secalonic acid and its derivatives, as well as the red anthraquinones endocrocin and clavorubin. The pathway begins with the synthesis of atrochrysone thioester by the polyketide synthase (PKS) CPUR_05437. The atrochrysone carboxyl ACP thioesterase CPUR_05436 then breaks the thioester bond and releases the atrochrysone carboxylic acid from CPUR_05437. The decarboxylase CPUR_05434 then catalyzes the concerted decarboxylation-elimination required to convert atochrysone carboxylic acid into emodin anthrone, which is further oxidized to emodin by the anthrone oxygenase CPUR_05435. Emodin is further modified to yield monodictyphenone via several steps involving CPUR_05427, CPUR_05428, CPUR_05429 and CPUR_05430. The short chain dehydrogenase/reductase CPUR_05418 then catalyzes the C-5 ketoreduction to give the xanthone skeleton of the monomeric units. Ergochromes formation requires further dimerization steps of different xanthone units, probably catalyzed by the cytochrome P450 monooxygenase CPUR_05419. CPUR_05425, CPUR_05426 and CPUR_05431 are unique to Claviceps, thus it is likely that they are involved in further modification of xanthone units or in their dimerization. The yellow ergochromes and the red anthraquinone pigments endocrocin and clavorubin are products from the same PKS derived precursors and the latter are likely shunt products in the pathway of xanthone biosynthesis. It is proposed that atrochrysone carboxylic acid released from the PKS CPUR_05437 can also be converted to endocrocin anthrone which is further oxidized into endocrocin by CPUR_05435. Endocrocin could be then modified to clavorubin, possibly by CPUR_05423 and CPUR_05431. Clavorubin is the principal anthraquinone metabolite produced by the cluster with a much higher yield compared to endocrocin. The protein is Decarboxylase CPUR_05434 of Claviceps purpurea (strain 20.1) (Ergot fungus).